Reading from the N-terminus, the 275-residue chain is Structure-specific endonuclease subunit SLX1 (275 aa).

The region spanning 12-95 (RFFGVYLLYC…QHPHASRRLA (84 aa)) is the GIY-YIG domain. Residues 148–161 (HVPLAFGPPPPQAP) are compositionally biased toward pro residues. The segment at 148–179 (HVPLAFGPPPPQAPAPRRRAGPFDDAEPEPDQ) is disordered. An SLX1-type zinc finger spans residues 186-238 (CSLCAQTIQDEEGPLCCPHPGCLLRAHVICLAEEFLQEEPGQLLPLEGQCPCC).

Belongs to the SLX1 family. Forms a heterodimer with SLX4. Requires a divalent metal cation as cofactor.

Its subcellular location is the nucleus. Functionally, catalytic subunit of the SLX1-SLX4 structure-specific endonuclease that resolves DNA secondary structures generated during DNA repair and recombination. Has endonuclease activity towards branched DNA substrates, introducing single-strand cuts in duplex DNA close to junctions with ss-DNA. Has a preference for 5'-flap structures, and promotes symmetrical cleavage of static and migrating Holliday junctions (HJs). Resolves HJs by generating two pairs of ligatable, nicked duplex products. The sequence is that of Structure-specific endonuclease subunit SLX1 from Homo sapiens (Human).